The primary structure comprises 1311 residues: Mitogen-activated protein kinase kinase kinase 19 (1311 aa).

Disordered regions lie at residues 85–119 (PDPL…SPPD), 250–274 (PLSQ…PVEH), 330–363 (SVKE…YLSS), 396–472 (MTPA…NPEM), 486–508 (EGTS…PAQN), 576–607 (HRPH…KQAF), and 734–767 (SKDK…FLSS). A compositionally biased stretch (polar residues) spans 250–261 (PLSQSAEFSSSK). Composition is skewed to basic and acidic residues over residues 262-274 (NHQE…PVEH), 330-345 (SVKE…RDSG), and 450-464 (LEGH…KIPM). The span at 734–748 (SKDKGCKDMGGHTED) shows a compositional bias: basic and acidic residues. A Protein kinase domain is found at 1044–1307 (WTKGEILGRG…ALQLLKHSFL (264 aa)). Residues 1050 to 1058 (LGRGAYGTV) and Lys1072 each bind ATP. Asp1169 acts as the Proton acceptor in catalysis.

The protein belongs to the protein kinase superfamily. STE Ser/Thr protein kinase family. STE20 subfamily.

It carries out the reaction L-seryl-[protein] + ATP = O-phospho-L-seryl-[protein] + ADP + H(+). The catalysed reaction is L-threonyl-[protein] + ATP = O-phospho-L-threonyl-[protein] + ADP + H(+). This chain is Mitogen-activated protein kinase kinase kinase 19 (Map3k19), found in Mus musculus (Mouse).